The primary structure comprises 321 residues: Phospho-N-acetylmuramoyl-pentapeptide-transferase (321 aa).

The next 10 membrane-spanning stretches (helical) occupy residues 1–21 (MIFV…PVLI), 50–70 (MGGL…IIFV), 76–96 (IILL…DDYI), 112–132 (FLAQ…FHLV), 140–160 (IPFT…IVFW), 176–196 (GLAT…SFVL), 200–220 (AIGI…PYNI), 225–245 (VFMG…ISIM), 250–270 (LSLI…MLQV), and 300–320 (VVTV…WIGV).

Belongs to the glycosyltransferase 4 family. MraY subfamily. Mg(2+) is required as a cofactor.

It localises to the cell membrane. The catalysed reaction is UDP-N-acetyl-alpha-D-muramoyl-L-alanyl-gamma-D-glutamyl-L-lysyl-D-alanyl-D-alanine + di-trans,octa-cis-undecaprenyl phosphate = Mur2Ac(oyl-L-Ala-gamma-D-Glu-L-Lys-D-Ala-D-Ala)-di-trans,octa-cis-undecaprenyl diphosphate + UMP. Its pathway is cell wall biogenesis; peptidoglycan biosynthesis. In terms of biological role, catalyzes the initial step of the lipid cycle reactions in the biosynthesis of the cell wall peptidoglycan: transfers peptidoglycan precursor phospho-MurNAc-pentapeptide from UDP-MurNAc-pentapeptide onto the lipid carrier undecaprenyl phosphate, yielding undecaprenyl-pyrophosphoryl-MurNAc-pentapeptide, known as lipid I. The sequence is that of Phospho-N-acetylmuramoyl-pentapeptide-transferase from Staphylococcus aureus (strain MSSA476).